We begin with the raw amino-acid sequence, 407 residues long: Chorismate synthase (407 aa).

2 residues coordinate NADP(+): Arg-40 and Arg-46. FMN contacts are provided by residues 140-142 (RSS), 261-262 (QA), Gly-305, 320-324 (KPIST), and Arg-346.

This sequence belongs to the chorismate synthase family. Homotetramer. FMNH2 is required as a cofactor.

The catalysed reaction is 5-O-(1-carboxyvinyl)-3-phosphoshikimate = chorismate + phosphate. The protein operates within metabolic intermediate biosynthesis; chorismate biosynthesis; chorismate from D-erythrose 4-phosphate and phosphoenolpyruvate: step 7/7. In terms of biological role, catalyzes the anti-1,4-elimination of the C-3 phosphate and the C-6 proR hydrogen from 5-enolpyruvylshikimate-3-phosphate (EPSP) to yield chorismate, which is the branch point compound that serves as the starting substrate for the three terminal pathways of aromatic amino acid biosynthesis. This reaction introduces a second double bond into the aromatic ring system. The polypeptide is Chorismate synthase (Corynebacterium glutamicum (strain R)).